Consider the following 432-residue polypeptide: Glutamyl-tRNA reductase (432 aa).

Residues 55-58, S114, 119-121, and Q125 each bind substrate; these read TCNR and ETQ. C56 serves as the catalytic Nucleophile. 194 to 199 serves as a coordination point for NADP(+); sequence GAGEMI.

The protein belongs to the glutamyl-tRNA reductase family. In terms of assembly, homodimer.

The catalysed reaction is (S)-4-amino-5-oxopentanoate + tRNA(Glu) + NADP(+) = L-glutamyl-tRNA(Glu) + NADPH + H(+). It functions in the pathway porphyrin-containing compound metabolism; protoporphyrin-IX biosynthesis; 5-aminolevulinate from L-glutamyl-tRNA(Glu): step 1/2. In terms of biological role, catalyzes the NADPH-dependent reduction of glutamyl-tRNA(Glu) to glutamate 1-semialdehyde (GSA). The sequence is that of Glutamyl-tRNA reductase from Burkholderia thailandensis (strain ATCC 700388 / DSM 13276 / CCUG 48851 / CIP 106301 / E264).